A 258-amino-acid chain; its full sequence is Acetylglutamate kinase (258 aa).

Substrate is bound by residues 44-45 (GG), arginine 66, and asparagine 158. Residues 181-186 (DVSGIL) and 209-211 (IIT) each bind ATP.

It belongs to the acetylglutamate kinase family. ArgB subfamily. In terms of assembly, homodimer.

The protein localises to the cytoplasm. The catalysed reaction is N-acetyl-L-glutamate + ATP = N-acetyl-L-glutamyl 5-phosphate + ADP. It functions in the pathway amino-acid biosynthesis; L-arginine biosynthesis; N(2)-acetyl-L-ornithine from L-glutamate: step 2/4. Catalyzes the ATP-dependent phosphorylation of N-acetyl-L-glutamate. In Shigella flexneri, this protein is Acetylglutamate kinase.